We begin with the raw amino-acid sequence, 431 residues long: Glucose-1-phosphate adenylyltransferase (431 aa).

Lys-39 contacts beta-D-fructose 1,6-bisphosphate. Arg-40, His-46, and Arg-52 together coordinate AMP. Tyr-114 lines the alpha-D-glucose 1-phosphate pocket. Arg-130 is a binding site for AMP. Alpha-D-glucose 1-phosphate is bound by residues Gly-179, 194–195, and Ser-212; that span reads EK. Residues Glu-370 and Arg-386 each contribute to the AMP site. Beta-D-fructose 1,6-bisphosphate-binding positions include 419–423 and 429–431; these read REMLR and QER.

This sequence belongs to the bacterial/plant glucose-1-phosphate adenylyltransferase family. Homotetramer.

The enzyme catalyses alpha-D-glucose 1-phosphate + ATP + H(+) = ADP-alpha-D-glucose + diphosphate. It participates in glycan biosynthesis; glycogen biosynthesis. With respect to regulation, allosterically activated by fructose-1,6-bisphosphate (F16BP) and inhibited by AMP. Functionally, involved in the biosynthesis of ADP-glucose, a building block required for the elongation reactions to produce glycogen. Catalyzes the reaction between ATP and alpha-D-glucose 1-phosphate (G1P) to produce pyrophosphate and ADP-Glc. This chain is Glucose-1-phosphate adenylyltransferase, found in Salmonella dublin (strain CT_02021853).